A 241-amino-acid polypeptide reads, in one-letter code: Small ribosomal subunit protein uS2 (241 aa).

The protein belongs to the universal ribosomal protein uS2 family.

In Erwinia tasmaniensis (strain DSM 17950 / CFBP 7177 / CIP 109463 / NCPPB 4357 / Et1/99), this protein is Small ribosomal subunit protein uS2.